A 335-amino-acid polypeptide reads, in one-letter code: Glycerol-3-phosphate dehydrogenase [NAD(P)+] (335 aa).

NADPH is bound by residues tryptophan 15, arginine 36, and lysine 109. Residues lysine 109, glycine 137, and serine 139 each contribute to the sn-glycerol 3-phosphate site. Alanine 141 is a binding site for NADPH. Lysine 192, aspartate 245, serine 255, arginine 256, and asparagine 257 together coordinate sn-glycerol 3-phosphate. Lysine 192 functions as the Proton acceptor in the catalytic mechanism. Arginine 256 contributes to the NADPH binding site. The NADPH site is built by leucine 279 and glutamate 281.

Belongs to the NAD-dependent glycerol-3-phosphate dehydrogenase family.

It localises to the cytoplasm. It catalyses the reaction sn-glycerol 3-phosphate + NAD(+) = dihydroxyacetone phosphate + NADH + H(+). It carries out the reaction sn-glycerol 3-phosphate + NADP(+) = dihydroxyacetone phosphate + NADPH + H(+). Its pathway is membrane lipid metabolism; glycerophospholipid metabolism. Functionally, catalyzes the reduction of the glycolytic intermediate dihydroxyacetone phosphate (DHAP) to sn-glycerol 3-phosphate (G3P), the key precursor for phospholipid synthesis. The sequence is that of Glycerol-3-phosphate dehydrogenase [NAD(P)+] from Beijerinckia indica subsp. indica (strain ATCC 9039 / DSM 1715 / NCIMB 8712).